The sequence spans 112 residues: MSAEVPEAASAEEQKEMEDKVTSPEKAEEAKLKARYPHLGQKPGGSDFLRKRLQKGQKYFDSGDYNMAKAKMKNKQLPTATPDKTEVTGDHIPTPQDLPQRKPSLVASKLAG.

The residue at position 1 (methionine 1) is an N-acetylmethionine. Residues 1–11 are compositionally biased toward low complexity; the sequence is MSAEVPEAASA. The disordered stretch occupies residues 1-49; it reads MSAEVPEAASAEEQKEMEDKVTSPEKAEEAKLKARYPHLGQKPGGSDFL. N-acetylserine is present on serine 2. Phosphoserine occurs at positions 2 and 23. Residues 12–32 show a composition bias toward basic and acidic residues; the sequence is EEQKEMEDKVTSPEKAEEAKL. A phosphoserine; by GWL mark is found at serine 62 and serine 104. The segment at 72 to 112 is disordered; it reads MKNKQLPTATPDKTEVTGDHIPTPQDLPQRKPSLVASKLAG. The residue at position 104 (serine 104) is a Phosphoserine; by PKA. Lysine 109 is modified (N6-acetyllysine).

In terms of assembly, interacts (when phosphorylated at Ser-62) with PPP2R2D. Interacts with SNCA. Interacts with PPP2R2A; the interaction is direct and this interaction inhibits PP2A activity. Phosphorylation at Ser-62 by MASTL/GWL during mitosis is essential for interaction with PPP2R2D (PR55-delta) and subsequent inactivation of PP2A. Phosphorylated by PKA. Isoform ARPP-19 is found in all brain regions and also present in non-neuronal tissues. Isoform ARPP-16 is enriched in the caudate nucleus, found in low levels in cerebral cortex.

The protein localises to the cytoplasm. Its function is as follows. Protein phosphatase inhibitor that specifically inhibits protein phosphatase 2A (PP2A) during mitosis. Inhibition of PP2A is enhanced when ARPP19 is phosphorylated. When phosphorylated at Ser-62 during mitosis, specifically interacts with PPP2R2D (PR55-delta) and inhibits its activity, leading to inactivation of PP2A, an essential condition to keep cyclin-B1-CDK1 activity high during M phase. May indirectly enhance GAP-43 expression. This Bos taurus (Bovine) protein is cAMP-regulated phosphoprotein 19 (ARPP19).